The primary structure comprises 355 residues: Peptide chain release factor 1 (355 aa).

An N5-methylglutamine modification is found at Q232.

It belongs to the prokaryotic/mitochondrial release factor family. Post-translationally, methylated by PrmC. Methylation increases the termination efficiency of RF1.

Its subcellular location is the cytoplasm. Functionally, peptide chain release factor 1 directs the termination of translation in response to the peptide chain termination codons UAG and UAA. The polypeptide is Peptide chain release factor 1 (Kineococcus radiotolerans (strain ATCC BAA-149 / DSM 14245 / SRS30216)).